We begin with the raw amino-acid sequence, 530 residues long: Phosphoenolpyruvate carboxykinase (ATP) (530 aa).

Positions 57, 193, and 199 each coordinate substrate. Residues Lys199, His218, and 234-242 contribute to the ATP site; that span reads GLSGTGKTT. Residues Lys199 and His218 each coordinate Mn(2+). Asp255 is a binding site for Mn(2+). Residues Glu283, Arg320, and Thr445 each coordinate ATP. Substrate is bound at residue Arg320.

Belongs to the phosphoenolpyruvate carboxykinase (ATP) family. Mn(2+) is required as a cofactor.

It localises to the cytoplasm. It carries out the reaction oxaloacetate + ATP = phosphoenolpyruvate + ADP + CO2. It functions in the pathway carbohydrate biosynthesis; gluconeogenesis. In terms of biological role, involved in the gluconeogenesis. Catalyzes the conversion of oxaloacetate (OAA) to phosphoenolpyruvate (PEP) through direct phosphoryl transfer between the nucleoside triphosphate and OAA. The protein is Phosphoenolpyruvate carboxykinase (ATP) of Leptospira interrogans serogroup Icterohaemorrhagiae serovar copenhageni (strain Fiocruz L1-130).